The primary structure comprises 185 residues: Adenine phosphoribosyltransferase (185 aa).

This sequence belongs to the purine/pyrimidine phosphoribosyltransferase family. In terms of assembly, homodimer.

It is found in the cytoplasm. The catalysed reaction is AMP + diphosphate = 5-phospho-alpha-D-ribose 1-diphosphate + adenine. It functions in the pathway purine metabolism; AMP biosynthesis via salvage pathway; AMP from adenine: step 1/1. In terms of biological role, catalyzes a salvage reaction resulting in the formation of AMP, that is energically less costly than de novo synthesis. This is Adenine phosphoribosyltransferase from Kineococcus radiotolerans (strain ATCC BAA-149 / DSM 14245 / SRS30216).